Here is a 162-residue protein sequence, read N- to C-terminus: Ribosome maturation factor RimP (162 aa).

This sequence belongs to the RimP family.

The protein resides in the cytoplasm. In terms of biological role, required for maturation of 30S ribosomal subunits. The protein is Ribosome maturation factor RimP of Leptospira biflexa serovar Patoc (strain Patoc 1 / Ames).